A 372-amino-acid polypeptide reads, in one-letter code: O-glycoside alpha-1,2-mannosyltransferase homolog 2 (372 aa).

The Cytoplasmic portion of the chain corresponds to 1–6 (MRISRL). A helical; Signal-anchor for type II membrane protein membrane pass occupies residues 7 to 27 (LIRVLLGFVILFITYILFPSI). At 28–372 (PKALVNTLNV…NLTNEDYDEL (345 aa)) the chain is on the lumenal side. Catalysis depends on Glu-271, which acts as the Nucleophile.

This sequence belongs to the glycosyltransferase 15 family.

It is found in the endoplasmic reticulum membrane. Its function is as follows. Probable mannosyltransferase involved in O-glycosylation of cell wall and secreted proteins. This chain is O-glycoside alpha-1,2-mannosyltransferase homolog 2 (omh2), found in Schizosaccharomyces pombe (strain 972 / ATCC 24843) (Fission yeast).